The sequence spans 1335 residues: Protein SPATA31F1 (1335 aa).

Residues 8–28 form a helical membrane-spanning segment; the sequence is LWEVGYPLYIYGSIFIVIVII. 5 disordered regions span residues 403–424, 480–502, 972–1002, 1019–1141, and 1248–1335; these read ALKA…SGSD, LPKT…MSPS, VQQN…SGDM, PSLE…LQDS, and ENVA…GHPT. Residues 414-424 are compositionally biased toward polar residues; sequence SGGQDNDSGSD. The segment covering 972–1000 has biased composition (polar residues); that stretch reads VQQNQKQSNSKAVPQGSAHSVSKISQPSG. 3 stretches are compositionally biased toward basic and acidic residues: residues 1047-1064, 1071-1083, and 1129-1139; these read NRED…REGD, STRE…EDQR, and PGEKESEKDLQ.

It belongs to the SPATA31 family.

Its subcellular location is the membrane. This is Protein SPATA31F1 from Homo sapiens (Human).